A 623-amino-acid chain; its full sequence is MSKVIGIDLGTTNSAVAVLEGKEPKIITNPEGNRTTPSVVAFKNGEIQVGEVAKRQAITNPNTIVSIKSHMGEEGYKVKVGDKEYTPQEISAFILQYIKKFSEDYLGEKVTDAVITVPAYFNDAQRQATKDAGKIAGLNVQRIINEPTASALAYGLDKDENDEKVLVYDLGGGTFDVSILQLGDGVFQVLSTNGDTHLGGDDFDKRIMDWLIQNFKEENGVDLSNDKMALQRLKDAAEKAKKDLSGVSSTNISLPFISAGEAGPLHLEADLTRAKFDELTDDLVQKTKIAFDNALSDAGLSVSDIDKVILNGGSTRIPAVQKAVKEWAGKEPDHSINPDEAVALGAAIQGGVISGDVKDIVLLDVTPLSLGIETMGGVFTKLIDRNTTIPTSKSQIFSTAADNQPAVDVHVLQGERPMAADDKTLGRFELTDIPPAPRGVPQIQVTFDIDKNGIVNVSAKDMGTGKEQKITIKSSSGLSDEEIKKMQKDAEEHAEEDKKRKEEVDLRNEVDQLIFTTEKTLKETKGKVPETETKNVQDALDALKKAQKDNNLDEMKEKKEALSKAAQDLAVKLYQQNGGAQGAAGQAGPQGAQGGQPNNDNGSSNGQGGSTVDGDFHKVDPDK.

Threonine 174 carries the phosphothreonine; by autocatalysis modification. Disordered regions lie at residues isoleucine 470–valine 504 and glycine 578–lysine 623. The segment covering glutamate 481–valine 504 has biased composition (basic and acidic residues). The span at glycine 578–serine 604 shows a compositional bias: low complexity. The segment covering glycine 614–lysine 623 has biased composition (basic and acidic residues).

Belongs to the heat shock protein 70 family.

Its function is as follows. Acts as a chaperone. This Lactobacillus gasseri (strain ATCC 33323 / DSM 20243 / BCRC 14619 / CIP 102991 / JCM 1131 / KCTC 3163 / NCIMB 11718 / NCTC 13722 / AM63) protein is Chaperone protein DnaK.